The primary structure comprises 469 residues: Solute carrier family 52, riboflavin transporter, member 3 (469 aa).

Topologically, residues 1-2 (MA) are cytoplasmic. The chain crosses the membrane as a helical span at residues 3-23 (FLMHLLVCVFGMGSWVTINGL). Residues 24-43 (WVELPLLVMELPEGWYLPSY) lie on the Extracellular side of the membrane. Residues 44 to 64 (LTVVIQLANIGPLLVTLLHHF) form a helical membrane-spanning segment. The Cytoplasmic segment spans residues 65 to 71 (RPSCLSE). A helical transmembrane segment spans residues 72 to 92 (VPIIFTLLGVGTVTCIIFAFL). The Extracellular segment spans residues 93–97 (WNMTS). An N-linked (GlcNAc...) asparagine glycan is attached at Asn-94. The helical transmembrane segment at 98–118 (WVLDGHHSIAFLVLTFFLALV) threads the bilayer. Residues 119–137 (DCTSSVTFLPFMSRLPTYY) lie on the Cytoplasmic side of the membrane. The chain crosses the membrane as a helical span at residues 138 to 158 (LTTFFVGEGLSGLLPALVALA). Over 159 to 220 (QGSGLTTCVN…SRYLPAHFSP (62 aa)) the chain is Extracellular. N-linked (GlcNAc...) asparagine glycosylation is present at Asn-168. A helical transmembrane segment spans residues 221–241 (LVFFLLLSIMMACCLVAFFVL). At 242–292 (QRQPRCWEASVEDLLNDQVTLHSIRPREENDLGPAGTVDSSQGQGYLEEKA) the chain is on the cytoplasmic side. At Ser-251 the chain carries Phosphoserine. The helical transmembrane segment at 293–313 (APCCPAHLAFIYTLVAFVNAL) threads the bilayer. The Extracellular segment spans residues 314–335 (TNGMLPSVQTYSCLSYGPVAYH). The chain crosses the membrane as a helical span at residues 336–356 (LAATLSIVANPLASLVSMFLP). The Cytoplasmic segment spans residues 357–359 (NRS). Residues 360–380 (LLFLGVLSVLGTCFGGYNMAM) form a helical membrane-spanning segment. The Extracellular portion of the chain corresponds to 381–396 (AVMSPCPLLQGHWGGE). The cysteines at positions 386 and 463 are disulfide-linked. A helical transmembrane segment spans residues 397 to 417 (VLIVASWVLFSGCLSYVKVML). Residues 418–427 (GVVLRDLSRS) lie on the Cytoplasmic side of the membrane. The chain crosses the membrane as a helical span at residues 428–448 (ALLWCGAAVQLGSLLGALLMF). The Extracellular segment spans residues 449 to 469 (PLVNVLRLFSSADFCNLHCPA).

It belongs to the riboflavin transporter family. In terms of tissue distribution, predominantly expressed in testis. Highly expressed in small intestine and prostate.

The protein localises to the apical cell membrane. It localises to the cell membrane. Its subcellular location is the nucleus membrane. It is found in the cytoplasm. It carries out the reaction riboflavin(in) = riboflavin(out). Activity is strongly inhibited by riboflavin analogs, such as lumiflavin, flavin mononucleotide (FMN), flavin adenine dinucleotide (FAD), by methylene blue, and to a lesser extent by amiloride. Riboflavin transport is Na(+)-independent at low pH but significantly reduced by Na(+) depletion under neutral pH conditions. Its function is as follows. Plasma membrane transporter mediating the uptake by cells of the water soluble vitamin B2/riboflavin that plays a key role in biochemical oxidation-reduction reactions of the carbohydrate, lipid, and amino acid metabolism. Humans are unable to synthesize vitamin B2/riboflavin and must obtain it via intestinal absorption. This is Solute carrier family 52, riboflavin transporter, member 3 (SLC52A3) from Homo sapiens (Human).